A 430-amino-acid polypeptide reads, in one-letter code: Adenylosuccinate synthetase (430 aa).

Residues 13–19 and 41–43 contribute to the GTP site; these read GDEGKGK and GHT. The active-site Proton acceptor is Asp14. 2 residues coordinate Mg(2+): Asp14 and Gly41. IMP is bound by residues 14 to 17, 39 to 42, Thr130, Arg144, Gln225, Thr240, and Arg304; these read DEGK and NAGH. Catalysis depends on His42, which acts as the Proton donor. Position 300 to 306 (300 to 306) interacts with substrate; it reads STTGRAR. GTP contacts are provided by residues Arg306, 332-334, and 414-416; these read KLD and STG.

The protein belongs to the adenylosuccinate synthetase family. As to quaternary structure, homodimer. Mg(2+) serves as cofactor.

The protein resides in the cytoplasm. The enzyme catalyses IMP + L-aspartate + GTP = N(6)-(1,2-dicarboxyethyl)-AMP + GDP + phosphate + 2 H(+). It functions in the pathway purine metabolism; AMP biosynthesis via de novo pathway; AMP from IMP: step 1/2. Plays an important role in the de novo pathway of purine nucleotide biosynthesis. Catalyzes the first committed step in the biosynthesis of AMP from IMP. This is Adenylosuccinate synthetase from Pseudomonas putida (strain W619).